A 418-amino-acid chain; its full sequence is cAMP-dependent protein kinase type II-beta regulatory subunit (418 aa).

The dimerization and phosphorylation stretch occupies residues 2–153 (SIEIPAGLTE…RLQEACKDIL (152 aa)). Basic and acidic residues predominate over residues 48-57 (TARFGHEGRT). Residues 48 to 96 (TARFGHEGRTWGDLGAAAGGGTPSKGVNFAEEPMQSDSEDGEEEEAAPA) are disordered. T69 is modified (phosphothreonine). Phosphoserine is present on residues S83, S85, and S114. Residues 84–94 (DSEDGEEEEAA) are compositionally biased toward acidic residues. Residues 154-275 (LFKN…ESLP), E223, R232, 276-418 (FLKS…EPTA), E352, and R361 contribute to the 3',5'-cyclic AMP site.

This sequence belongs to the cAMP-dependent kinase regulatory chain family. As to quaternary structure, the inactive form of the enzyme is composed of two regulatory chains and two catalytic chains. Activation by cAMP produces two active catalytic monomers and a regulatory dimer that binds four cAMP molecules. Interacts with PRKACA and PRKACB. Interacts with the phosphorylated form of PJA2. Forms a complex composed of PRKAR2B, GSK3B and GSKIP through GSKIP interaction; facilitates PKA-induced phosphorylation and regulates GSK3B activity. Post-translationally, phosphorylated by the activated catalytic chain. As to expression, four types of regulatory chains are found: I-alpha, I-beta, II-alpha, and II-beta. Their expression varies among tissues and is in some cases constitutive and in others inducible.

It is found in the cytoplasm. Its subcellular location is the cell membrane. Regulatory subunit of the cAMP-dependent protein kinases involved in cAMP signaling in cells. Type II regulatory chains mediate membrane association by binding to anchoring proteins, including the MAP2 kinase. The protein is cAMP-dependent protein kinase type II-beta regulatory subunit (PRKAR2B) of Homo sapiens (Human).